Here is a 1012-residue protein sequence, read N- to C-terminus: MIIRRFVRHLSTSKSSIRINAVGIQHLAPSLQNQLFGKSSPRLDEDLINMAKRHLKSNNLIGKKSSLNDPIEIQLPSLQGNTLDEHFYKLGSASLEPYNPLIDELLNLNIIEPQFEFAFQSGWTRYAPGEPSEKVPYPLEDSYFFDVETMYKVSQYPVMAVALSDKAWYGWVSPYLTEESTTNDHLIPLNTFETEKFIVGHNVSYDRARALEEYNLKQTKAFWMDTMALHVSVSGMCTRQRGTWIKHNKKEQENTMSVASIKSKVQNEELQELLDSTSIEDPMLEDNPWINKSSLNSLERVAEFYCKIKLKKDIRNSFATEDPDELRGNFDELMQYCAKDVFATGKVFQKVYPKFKKLIPHPVTLAALKDISSCILPTTTKWEDYIETSERLYQESRRMIEKNLHVICEETVKLKDDPTKPWENDPWLSQLDWTIDPIRLTKKGEIHKNQKLPGYPNWYKQLIVKNELKLTTKTRTSPLLLKLAWNGNPLYWIQTQGWCFKVPKNKTEEYEKLNFVMVSLKKLSEDPGFESIRAEDLKNFTFVKVPHPDGPSARVTNCMTKSCLGFFEKGFLNSQYPLAKDALQMAVASSYWTSSRERIMNQFVVFEDDMGYILPQIIPMGTITRRAVENTWLTASNAKKNRLGSELKSLIEAPKGYCFVGADVDSEELWIASLIGDSVFKIHGGTAIGWMTLEGTKNEGTDLHSKTAKILGISRNEAKIFNYGRIYGAGIKFTTTLLKKFNPALSDAEAKATANALYTATKGISGRYDKKSIWYGGSESIIFNRLEAIAEMAHPKTPVLGAGITAPLQKANLSTNNFLTSRINWAIQSSGVDYLHLLIISMDYLIKLFDIDARLCITVHDEIRYLVKEEDKFRAAYALQISNLWTRAMFCQQLGINEVPQSCAFFSAVDLDFVLRKEVDLDCVTPSNPDPIPCGKSLDIYQLLQQEDIKGADFPRTMHLNDVHYRKRTPVIEMFDKAVDDKTRKFMVSLQIAQDKTEFTKWKRSRGELIVH.

The protein belongs to the DNA polymerase type-A family. It depends on Mg(2+) as a cofactor.

It is found in the mitochondrion. The catalysed reaction is DNA(n) + a 2'-deoxyribonucleoside 5'-triphosphate = DNA(n+1) + diphosphate. Involved in the replication of mitochondrial DNA. This chain is DNA polymerase gamma (MIP1), found in Komagataella pastoris (Yeast).